Reading from the N-terminus, the 938-residue chain is MSSSSVSNTLSIETKSDPKDPAFVASQESTECNEHDTTQLSGSSSEPLENNSSLTRSTDDPSVEIRSKLVSPDNEANLLSDQNITISNENNNENDTTEEAETSSGNEAADDEDSSSDAQSSVPSFSEIHDGMSEEELDKERKTLTHLRRISLQGADDPEIPTDWSVAMSPPETEQDASTLFWVPANLHPELNPTGWKSFLDLQVKNLKSPTATDTSSSPLEHIRSLRRRKSLLSRQVKADDAVINYQDGSPIVEKAYLKRHRSLRLNELEHLESLARDPHRMVSLVDGMSNGSPEDSPLLVSPNHFLQRSSRTTIRRTGASIRTIHRGKTSTLSGNRSHSILQKPTDTSPLHKIEPISADELVESDDSRTSALSNSQNPSDDVENQSDQALEVLSLTNPPKIDNASADTTLHKETNKIDKLYVSENKAESAVASESSLSEGTLALKAPAPENKPEKSSTSKPPVPENKAEDSVVLKSSVPEDKSENSIASKPSATEGIPENAIALQSSVPENKAEDSVVLKSSVPEDKSEDSVPSKSSVLEDKHENSVEIDKKADDSLPSNNKTEGYTPSVVREEKNYSEPNASPSVIPPRVPTPVPGRTLSPKPTRIPTPIPSSLNVSLESSKKPEIFHERHIPTPETGPNKPSKNNILKSTQVPVTPKQKSSTANKGSTSSPSPPSSESKKTKRSWGRLFVSGDSDKEHKEHKKDKQKKKNDQISSSSKSASSFKKDRDKESIFGSLFGSKKKQTEIPPVSSSPPHNDAPPKAKPISAPSELPNTTSVAEAKCQTVTDDEGTDQQSDEKSTEPKTFIPDKDYYWSRFPICTERAIYRLSHIKLSNAHRPLFQQVLLSNFMYSYLDLISRISSNRPMNNVQQSTAKPIRKDINGQQRRSEFSAENVKNELENLSYQFGDQRKRNLNRKGSTIHTVSQNIQKVSKNAK.

The segment covering Met-1–Glu-13 has biased composition (polar residues). Disordered stretches follow at residues Met-1–Glu-140, His-326–Gln-386, and Ser-424–Thr-807. Positions Leu-40–Leu-54 are enriched in low complexity. Residues Ser-57–Ser-67 are compositionally biased toward basic and acidic residues. Positions Asn-77–Ile-86 are enriched in polar residues. Residues Ser-116–Ser-126 are compositionally biased toward low complexity. Over residues Glu-127–Glu-140 the composition is skewed to basic and acidic residues. Composition is skewed to polar residues over residues Thr-330–Ser-349 and Thr-370–Ser-380. Low complexity predominate over residues Glu-429–Glu-440. Basic and acidic residues-rich tracts occupy residues Asn-467–Glu-485 and Asn-512–Asp-556. Over residues Leu-558 to Tyr-567 the composition is skewed to polar residues. A compositionally biased stretch (pro residues) spans Val-587–Val-596. Over residues Ser-622–Pro-635 the composition is skewed to basic and acidic residues. The segment covering Asn-642–Gly-669 has biased composition (polar residues). The span at Lys-702 to Lys-711 shows a compositional bias: basic residues. Low complexity predominate over residues Gln-715–Ser-725. Residues Ser-798 to Thr-807 show a composition bias toward basic and acidic residues.

Its subcellular location is the cytoplasm. Its function is as follows. Has a role in establishing cell polarity. Also required for maintenance of cell wall integrity, sexual differentiation, calcium tolerance and cell morphology. Involved in Ras-MAPK signaling pathway at cell cortex. Has a role in meiosis. In Schizosaccharomyces pombe (strain 972 / ATCC 24843) (Fission yeast), this protein is Protein zds1 (zds1).